We begin with the raw amino-acid sequence, 98 residues long: Hainantoxin-XVII.2 (98 aa).

An N-terminal signal peptide occupies residues 1 to 40 (MTTVGVSLFRRSPEKITMKIAAFLGLSFLLIASYVLICEA). Positions 41 to 64 (QHPGFQELLILEENMRDPENSKER) are excised as a propeptide. 3 disulfides stabilise this stretch: Cys-66-Cys-81, Cys-73-Cys-85, and Cys-80-Cys-95.

It belongs to the hainantoxin family. 17 subfamily. As to expression, expressed by the venom gland.

It is found in the secreted. Functionally, putative ion channel inhibitor. The polypeptide is Hainantoxin-XVII.2 (Cyriopagopus hainanus (Chinese bird spider)).